A 265-amino-acid polypeptide reads, in one-letter code: Probable cyclic nucleotide phosphodiesterase SynWH7803_1390 (265 aa).

Fe cation-binding residues include aspartate 9, histidine 11, aspartate 49, asparagine 86, histidine 157, histidine 196, and histidine 198. Residues histidine 11, aspartate 49, and 86-87 (NH) each bind AMP. Histidine 198 is an AMP binding site.

It belongs to the cyclic nucleotide phosphodiesterase class-III family. It depends on Fe(2+) as a cofactor.

This Synechococcus sp. (strain WH7803) protein is Probable cyclic nucleotide phosphodiesterase SynWH7803_1390.